Consider the following 90-residue polypeptide: Molybdopterin synthase sulfur carrier subunit (90 aa).

G90 is subject to 1-thioglycine; alternate. G90 carries the post-translational modification Glycyl adenylate; alternate.

Belongs to the MoaD family. MOCS2A subfamily. As to quaternary structure, heterotetramer; composed of 2 small (Mocs2A) and 2 large (Mocs2B) subunits. In terms of processing, C-terminal thiocarboxylation occurs in 2 steps, it is first acyl-adenylated (-COAMP) via the hesA/moeB/thiF part of MOCS3, then thiocarboxylated (-COSH) via the rhodanese domain of MOCS3.

Its subcellular location is the cytoplasm. It participates in cofactor biosynthesis; molybdopterin biosynthesis. Acts as a sulfur carrier required for molybdopterin biosynthesis. Component of the molybdopterin synthase complex that catalyzes the conversion of precursor Z into molybdopterin by mediating the incorporation of 2 sulfur atoms into precursor Z to generate a dithiolene group. In the complex, serves as sulfur donor by being thiocarboxylated (-COSH) at its C-terminus by MOCS3. After interaction with Mocs2B, the sulfur is then transferred to precursor Z to form molybdopterin. The chain is Molybdopterin synthase sulfur carrier subunit from Drosophila yakuba (Fruit fly).